The following is a 108-amino-acid chain: UPF0145 protein Fnod_0426 (108 aa).

It belongs to the UPF0145 family.

The chain is UPF0145 protein Fnod_0426 from Fervidobacterium nodosum (strain ATCC 35602 / DSM 5306 / Rt17-B1).